We begin with the raw amino-acid sequence, 2555 residues long: Plipastatin synthase subunit C (2555 aa).

Positions 7–306 (IQDIYPLSFM…NTIPIRAQSD (300 aa)) are condensation 1. Residues 491–894 (TYAELDMYAS…SIEGVREAAV (404 aa)) form an adenylation 1 region. A Carrier 1 domain is found at 967 to 1042 (APRNVTEMKL…GLATVIREGT (76 aa)). Position 1002 is an O-(pantetheine 4'-phosphoryl)serine (Ser1002). The tract at residues 1054–1344 (KQETYPVSSA…NTLALRTRPE (291 aa)) is condensation 2. The adenylation 2 stretch occupies residues 1532 to 1927 (TYEDLNSWAN…QIDGVKEAAV (396 aa)). In terms of domain architecture, Carrier 2 spans 2003–2077 (PPRNELEEQL…DLSPFIRKSE (75 aa)). An O-(pantetheine 4'-phosphoryl)serine modification is found at Ser2038. Positions 2085–2548 (IQGDVPWTPV…SLTAEDLDSI (464 aa)) are epimerization 3.

Belongs to the ATP-dependent AMP-binding enzyme family. The cofactor is pantetheine 4'-phosphate.

Its function is as follows. This protein is a multifunctional enzyme, able to activate and polymerize the amino acids Glu and Ala/Val as part of the biosynthesis of the lipopeptide antibiotic plipastatin. The Ala/Val residue is further epimerized to the D-isomer form. The activation sites for these amino acids consist of individual domains. This chain is Plipastatin synthase subunit C (ppsC), found in Bacillus subtilis (strain 168).